A 100-amino-acid chain; its full sequence is uncharacterized protein (100 aa).

This is an uncharacterized protein from Caenorhabditis elegans.